The primary structure comprises 125 residues: MARIVGVELPNNKKVWVALTYIYGIGRSRSFEILKNTGIDPEKRVGDLTDEEISKITKYIQDHFKVEGELRSEVERNIRRLIEIGCYRGIRHKLGLPVRGQKTRSNARTRKGPRPSRIKTKKKSS.

Positions 97–125 are disordered; it reads PVRGQKTRSNARTRKGPRPSRIKTKKKSS. Residues 101–125 are compositionally biased toward basic residues; that stretch reads QKTRSNARTRKGPRPSRIKTKKKSS.

It belongs to the universal ribosomal protein uS13 family. As to quaternary structure, part of the 30S ribosomal subunit. Forms a loose heterodimer with protein S19. Forms two bridges to the 50S subunit in the 70S ribosome.

Functionally, located at the top of the head of the 30S subunit, it contacts several helices of the 16S rRNA. In the 70S ribosome it contacts the 23S rRNA (bridge B1a) and protein L5 of the 50S subunit (bridge B1b), connecting the 2 subunits; these bridges are implicated in subunit movement. Contacts the tRNAs in the A and P-sites. The polypeptide is Small ribosomal subunit protein uS13 (Thermotoga maritima (strain ATCC 43589 / DSM 3109 / JCM 10099 / NBRC 100826 / MSB8)).